Consider the following 353-residue polypeptide: Forkhead box protein I3-A (353 aa).

Positions 116 to 210 (RPPYSYSALI…DNGNFRRKRK (95 aa)) form a DNA-binding region, fork-head. Residues 201–255 (DNGNFRRKRKRKSDSLAEEEGKGYSGSDSALSSPKNPSDSSERGNSPISTDQAPC) form a disordered region. The Nuclear localization signal motif lies at 206 to 212 (RRKRKRK). Residues 213-222 (SDSLAEEEGK) are compositionally biased toward basic and acidic residues. The span at 226–252 (GSDSALSSPKNPSDSSERGNSPISTDQ) shows a compositional bias: polar residues.

As to expression, expressed in ionocyte precursors.

The protein localises to the nucleus. Its function is as follows. Transcription factor required for epithelial cell differentiation. Involved in specification of skin ionocytes from epidermal precursors. The sequence is that of Forkhead box protein I3-A from Danio rerio (Zebrafish).